Reading from the N-terminus, the 478-residue chain is Kynureninase (478 aa).

Pyridoxal 5'-phosphate contacts are provided by residues Leu138, Thr139, 166–169 (FPSD), Asp252, His255, and Tyr277. The residue at position 278 (Lys278) is an N6-(pyridoxal phosphate)lysine. The pyridoxal 5'-phosphate site is built by Trp315 and Asn343.

Belongs to the kynureninase family. In terms of assembly, homodimer. It depends on pyridoxal 5'-phosphate as a cofactor.

Its subcellular location is the cytoplasm. It carries out the reaction L-kynurenine + H2O = anthranilate + L-alanine + H(+). The catalysed reaction is 3-hydroxy-L-kynurenine + H2O = 3-hydroxyanthranilate + L-alanine + H(+). The protein operates within amino-acid degradation; L-kynurenine degradation; L-alanine and anthranilate from L-kynurenine: step 1/1. It participates in cofactor biosynthesis; NAD(+) biosynthesis; quinolinate from L-kynurenine: step 2/3. Functionally, catalyzes the cleavage of L-kynurenine (L-Kyn) and L-3-hydroxykynurenine (L-3OHKyn) into anthranilic acid (AA) and 3-hydroxyanthranilic acid (3-OHAA), respectively. This chain is Kynureninase, found in Coccidioides immitis (strain RS) (Valley fever fungus).